The sequence spans 208 residues: UPF0637 protein BCQ_3749 (208 aa).

The protein belongs to the UPF0637 family.

This chain is UPF0637 protein BCQ_3749, found in Bacillus cereus (strain Q1).